Here is an 817-residue protein sequence, read N- to C-terminus: Ribonuclease R 1 (817 aa).

The RNB domain occupies 259–584 (RVDYRNEITF…DLLVHRLIRE (326 aa)). Positions 637-717 (GEEYEGIIAS…MTGEIDFEYL (81 aa)) constitute an S1 motif domain. The tract at residues 728–817 (AKAKKKPDHK…DGRKKPHKRG (90 aa)) is disordered. Residues 729–742 (KAKKKPDHKGRKKS) show a composition bias toward basic residues. Basic and acidic residues-rich tracts occupy residues 767–777 (RRADEKFEFDK) and 795–810 (KFTD…TDGR).

It belongs to the RNR ribonuclease family. RNase R subfamily.

It localises to the cytoplasm. It catalyses the reaction Exonucleolytic cleavage in the 3'- to 5'-direction to yield nucleoside 5'-phosphates.. Functionally, 3'-5' exoribonuclease that releases 5'-nucleoside monophosphates and is involved in maturation of structured RNAs. The protein is Ribonuclease R 1 (rnr1) of Lactococcus lactis subsp. lactis (strain IL1403) (Streptococcus lactis).